We begin with the raw amino-acid sequence, 466 residues long: Histidinol dehydrogenase, chloroplastic (466 aa).

The transit peptide at 1–30 (MSLNLSRLSLLSSPRISISTHAPRKGYVCC) directs the protein to the chloroplast. NAD(+) is bound by residues Tyr-155, Gln-217, and Asn-240. Substrate contacts are provided by Ser-266, Gln-288, and His-291. Residues Gln-288 and His-291 each contribute to the Zn(2+) site. Active-site proton acceptor residues include Glu-356 and His-357. 4 residues coordinate substrate: His-357, Asp-390, Glu-444, and His-449. Position 390 (Asp-390) interacts with Zn(2+). A Zn(2+)-binding site is contributed by His-449.

It belongs to the histidinol dehydrogenase family. Zn(2+) serves as cofactor.

It localises to the plastid. The protein localises to the chloroplast. The enzyme catalyses L-histidinol + 2 NAD(+) + H2O = L-histidine + 2 NADH + 3 H(+). It functions in the pathway amino-acid biosynthesis; L-histidine biosynthesis; L-histidine from 5-phospho-alpha-D-ribose 1-diphosphate: step 9/9. Its function is as follows. Catalyzes the sequential NAD-dependent oxidations of L-histidinol to L-histidinaldehyde and then to L-histidine. The sequence is that of Histidinol dehydrogenase, chloroplastic (HISN8) from Arabidopsis thaliana (Mouse-ear cress).